We begin with the raw amino-acid sequence, 367 residues long: Alanine racemase (367 aa).

The active-site Proton acceptor; specific for D-alanine is the Lys40. At Lys40 the chain carries N6-(pyridoxal phosphate)lysine. Arg136 is a binding site for substrate. Tyr263 (proton acceptor; specific for L-alanine) is an active-site residue. Position 310 (Met310) interacts with substrate.

The protein belongs to the alanine racemase family. It depends on pyridoxal 5'-phosphate as a cofactor.

The enzyme catalyses L-alanine = D-alanine. It participates in amino-acid biosynthesis; D-alanine biosynthesis; D-alanine from L-alanine: step 1/1. Catalyzes the interconversion of L-alanine and D-alanine. May also act on other amino acids. This is Alanine racemase (alr) from Streptococcus pneumoniae (strain ATCC 700669 / Spain 23F-1).